The following is a 304-amino-acid chain: Protease HtpX homolog (304 aa).

A run of 2 helical transmembrane segments spans residues 14–34 (IFIILGFFIFVLMVGAAIGII) and 39–59 (YLNGLVLAAVIGAFYILIMVM). Histidine 144 lines the Zn(2+) pocket. Residue glutamate 145 is part of the active site. Histidine 148 is a Zn(2+) binding site. 2 helical membrane-spanning segments follow: residues 159–179 (IAIALVAVIAILSDIAMRMIF) and 202–222 (AIIYIVALIFVILAPIIATAI). Position 231 (glutamate 231) interacts with Zn(2+).

The protein belongs to the peptidase M48B family. The cofactor is Zn(2+).

The protein localises to the cell membrane. The polypeptide is Protease HtpX homolog (Listeria monocytogenes serovar 1/2a (strain ATCC BAA-679 / EGD-e)).